A 466-amino-acid polypeptide reads, in one-letter code: Ribosome biogenesis protein YTM1 (466 aa).

The ubiquitin-like (UBL) domain stretch occupies residues 11-99; sequence IKIKFFTNEE…EAFLTLEYTR (89 aa). Residues 109 to 466 are sufficient for interaction with ERB1 and association with 66S pre-ribosomes; sequence SFNNDDWISS…QINKGSDIAK (358 aa). WD repeat units follow at residues 124 to 163, 165 to 203, 219 to 258, 296 to 336, 338 to 377, 384 to 424, and 431 to 466; these read PTTK…EKQY, GHSA…IIDE, GHKA…MTSI, GHSE…CVDT, TTGY…TSDQ, GHTN…SLYT, and STNA…DIAK.

This sequence belongs to the WD repeat WDR12/YTM1 family. As to quaternary structure, component of the NOP7 complex, composed of ERB1, NOP7 and YTM1. The complex is held together by ERB1, which interacts with NOP7 via its N-terminal domain and with YTM1 via a high-affinity interaction between the seven-bladed beta-propeller domains of the 2 proteins. The NOP7 complex associates with the 66S pre-ribosome. Interacts (via UBL domain) with MDN1 (via VWFA/MIDAS domain).

Its subcellular location is the nucleus. It is found in the nucleolus. It localises to the nucleoplasm. Component of the NOP7 complex, which is required for maturation of the 25S and 5.8S ribosomal RNAs and formation of the 60S ribosome. The polypeptide is Ribosome biogenesis protein YTM1 (Candida albicans (strain SC5314 / ATCC MYA-2876) (Yeast)).